The sequence spans 134 residues: Retinol-binding protein 2 (134 aa).

All-trans-retinol-binding residues include K41 and Q109.

It belongs to the calycin superfamily. Fatty-acid binding protein (FABP) family. Expressed in prenatal liver, intestine and lung, and in adult intestine.

Its subcellular location is the cytoplasm. Functionally, intracellular transport of retinol. This Mus musculus (Mouse) protein is Retinol-binding protein 2 (Rbp2).